We begin with the raw amino-acid sequence, 273 residues long: Dermonecrotic toxin LapSicTox-alphaIB1aiv (273 aa).

Histidine 5 is an active-site residue. Mg(2+) is bound by residues glutamate 25 and aspartate 27. Histidine 41 acts as the Nucleophile in catalysis. Intrachain disulfides connect cysteine 45-cysteine 51 and cysteine 47-cysteine 190. Aspartate 85 provides a ligand contact to Mg(2+). N-linked (GlcNAc...) asparagine glycosylation is present at asparagine 250.

The protein belongs to the arthropod phospholipase D family. Class II subfamily. Mg(2+) is required as a cofactor. In terms of tissue distribution, expressed by the venom gland.

It is found in the secreted. The enzyme catalyses an N-(acyl)-sphingosylphosphocholine = an N-(acyl)-sphingosyl-1,3-cyclic phosphate + choline. It catalyses the reaction an N-(acyl)-sphingosylphosphoethanolamine = an N-(acyl)-sphingosyl-1,3-cyclic phosphate + ethanolamine. It carries out the reaction a 1-acyl-sn-glycero-3-phosphocholine = a 1-acyl-sn-glycero-2,3-cyclic phosphate + choline. The catalysed reaction is a 1-acyl-sn-glycero-3-phosphoethanolamine = a 1-acyl-sn-glycero-2,3-cyclic phosphate + ethanolamine. Dermonecrotic toxins cleave the phosphodiester linkage between the phosphate and headgroup of certain phospholipids (sphingolipid and lysolipid substrates), forming an alcohol (often choline) and a cyclic phosphate. This toxin acts on sphingomyelin (SM). It may also act on ceramide phosphoethanolamine (CPE), lysophosphatidylcholine (LPC) and lysophosphatidylethanolamine (LPE), but not on lysophosphatidylserine (LPS), and lysophosphatidylglycerol (LPG). It acts by transphosphatidylation, releasing exclusively cyclic phosphate products as second products. Induces dermonecrosis, hemolysis, increased vascular permeability, edema, inflammatory response, and platelet aggregation. In Loxosceles apachea (Apache recluse spider), this protein is Dermonecrotic toxin LapSicTox-alphaIB1aiv.